Here is a 234-residue protein sequence, read N- to C-terminus: Endonuclease V (234 aa).

Residues Asp36 and Asp104 each coordinate Mg(2+).

This sequence belongs to the endonuclease V family. The cofactor is Mg(2+).

The protein localises to the cytoplasm. It carries out the reaction Endonucleolytic cleavage at apurinic or apyrimidinic sites to products with a 5'-phosphate.. In terms of biological role, DNA repair enzyme involved in the repair of deaminated bases. Selectively cleaves double-stranded DNA at the second phosphodiester bond 3' to a deoxyinosine leaving behind the intact lesion on the nicked DNA. This is Endonuclease V from Yersinia pestis.